A 273-amino-acid chain; its full sequence is Dermonecrotic toxin SdSicTox-betaIIB1aiii (273 aa).

H4 is an active-site residue. Mg(2+) is bound by residues E24 and D26. The Nucleophile role is filled by H40. 2 cysteine pairs are disulfide-bonded: C44/C50 and C46/C189. Residue D84 participates in Mg(2+) binding.

The protein belongs to the arthropod phospholipase D family. Class II subfamily. Mg(2+) is required as a cofactor. In terms of tissue distribution, expressed by the venom gland.

It localises to the secreted. The enzyme catalyses an N-(acyl)-sphingosylphosphocholine = an N-(acyl)-sphingosyl-1,3-cyclic phosphate + choline. It carries out the reaction an N-(acyl)-sphingosylphosphoethanolamine = an N-(acyl)-sphingosyl-1,3-cyclic phosphate + ethanolamine. It catalyses the reaction a 1-acyl-sn-glycero-3-phosphocholine = a 1-acyl-sn-glycero-2,3-cyclic phosphate + choline. The catalysed reaction is a 1-acyl-sn-glycero-3-phosphoethanolamine = a 1-acyl-sn-glycero-2,3-cyclic phosphate + ethanolamine. In terms of biological role, dermonecrotic toxins cleave the phosphodiester linkage between the phosphate and headgroup of certain phospholipids (sphingolipid and lysolipid substrates), forming an alcohol (often choline) and a cyclic phosphate. This toxin acts on sphingomyelin (SM). It may also act on ceramide phosphoethanolamine (CPE), lysophosphatidylcholine (LPC) and lysophosphatidylethanolamine (LPE), but not on lysophosphatidylserine (LPS), and lysophosphatidylglycerol (LPG). It acts by transphosphatidylation, releasing exclusively cyclic phosphate products as second products. Induces dermonecrosis, hemolysis, increased vascular permeability, edema, inflammatory response, and platelet aggregation. In Sicarius cf. damarensis (strain GJB-2008) (Six-eyed sand spider), this protein is Dermonecrotic toxin SdSicTox-betaIIB1aiii.